We begin with the raw amino-acid sequence, 413 residues long: Divalent metal cation transporter MntH (413 aa).

The next 11 membrane-spanning stretches (helical) occupy residues 19–39 (LALM…GNFA), 46–66 (ASFG…AMLI), 94–114 (VWFY…AEFI), 122–142 (LVLG…TFLI), 156–176 (VIGG…IFSQ), 196–216 (AVFL…IYLH), 241–261 (IAMT…AAAF), 290–310 (IFGL…TLAG), 329–349 (AVTM…TRIL), 350–370 (VMSQ…LLIF), and 392–412 (VIVA…LLGV).

This sequence belongs to the NRAMP family.

It localises to the cell inner membrane. Its function is as follows. H(+)-stimulated, divalent metal cation uptake system. This is Divalent metal cation transporter MntH from Klebsiella pneumoniae (strain 342).